The chain runs to 1661 residues: Beta/gamma crystallin domain-containing protein 2 (1661 aa).

Disordered stretches follow at residues Glu-72 to Val-135, Pro-148 to Ser-168, Val-242 to Ser-268, Pro-297 to Pro-321, Ser-337 to Gly-380, Glu-411 to Glu-757, Leu-808 to Ser-871, and Thr-883 to Arg-903. Over residues Pro-105–Val-118 the composition is skewed to basic and acidic residues. The span at Ser-337 to Ser-353 shows a compositional bias: polar residues. Low complexity predominate over residues Pro-431 to Pro-442. Polar residues-rich tracts occupy residues Ser-507–Ser-519, Pro-628–Gln-644, and Ser-685–Glu-697. Residues Pro-706–Pro-719 show a composition bias toward low complexity. The segment covering Glu-731–Glu-750 has biased composition (polar residues). The segment covering Glu-825–Glu-835 has biased composition (acidic residues). Over residues Asp-841–Lys-851 the composition is skewed to basic and acidic residues. Beta/gamma crystallin 'Greek key' domains are found at residues Gly-986–Arg-1023, Gly-1024–Val-1067, Pro-1073–Ala-1113, Gly-1114–Arg-1156, Pro-1168–Gly-1213, Gly-1214–Arg-1256, Pro-1262–Ser-1302, Gly-1303–Leu-1345, Ser-1356–Gly-1393, Gly-1394–Ser-1437, Pro-1443–Gly-1483, and Gly-1484–Lys-1525. In terms of domain architecture, Ricin B-type lectin spans Trp-1569 to His-1659.

This sequence belongs to the beta/gamma-crystallin family.

The chain is Beta/gamma crystallin domain-containing protein 2 from Homo sapiens (Human).